Consider the following 883-residue polypeptide: Integrator complex subunit 6-A (883 aa).

One can recognise a VWFA domain in the interval 3-227 (ILLFLLDTSA…QCLESLVQKV (225 aa)). Residues 626–633 (MMIDEADE) carry the Inhibitory loop motif.

This sequence belongs to the Integrator subunit 6 family. As to quaternary structure, component of the Integrator complex, composed of core subunits INTS1, INTS2, INTS3, INTS4, INTS5, INTS6, INTS7, INTS8, INTS9/RC74, INTS10, INTS11/CPSF3L, INTS12, INTS13, INTS14 and INTS15. The core complex associates with protein phosphatase 2A subunits PPP2CA and PPP2R1A, to form the Integrator-PP2A (INTAC) complex.

The protein resides in the nucleus. The protein localises to the chromosome. Component of the integrator complex, a multiprotein complex that terminates RNA polymerase II (Pol II) transcription in the promoter-proximal region of genes. The integrator complex provides a quality checkpoint during transcription elongation by driving premature transcription termination of transcripts that are unfavorably configured for transcriptional elongation: the complex terminates transcription by (1) catalyzing dephosphorylation of the C-terminal domain (CTD) of Pol II subunit POLR2A/RPB1 and SUPT5H/SPT5, (2) degrading the exiting nascent RNA transcript via endonuclease activity and (3) promoting the release of Pol II from bound DNA. The integrator complex is also involved in terminating the synthesis of non-coding Pol II transcripts, such as enhancer RNAs (eRNAs), small nuclear RNAs (snRNAs), telomerase RNAs and long non-coding RNAs (lncRNAs). Within the integrator complex, INTS6 acts as a molecular adapter that promotes assembly of protein phosphatase 2A (PP2A) subunits to the integrator core complex, promoting recruitment of PP2A to transcription pause-release checkpoint. This chain is Integrator complex subunit 6-A (ints6-a), found in Xenopus laevis (African clawed frog).